A 428-amino-acid polypeptide reads, in one-letter code: 3-phosphoshikimate 1-carboxyvinyltransferase (428 aa).

Positions 22, 23, and 27 each coordinate 3-phosphoshikimate. Residue Lys22 participates in phosphoenolpyruvate binding. 2 residues coordinate phosphoenolpyruvate: Gly96 and Arg124. Ser169, Ser170, Gln171, Ser197, Asp313, Asn336, and Lys340 together coordinate 3-phosphoshikimate. Position 171 (Gln171) interacts with phosphoenolpyruvate. Asp313 functions as the Proton acceptor in the catalytic mechanism. 3 residues coordinate phosphoenolpyruvate: Arg344, Arg386, and Lys411.

The protein belongs to the EPSP synthase family. In terms of assembly, monomer.

The protein localises to the cytoplasm. The catalysed reaction is 3-phosphoshikimate + phosphoenolpyruvate = 5-O-(1-carboxyvinyl)-3-phosphoshikimate + phosphate. The protein operates within metabolic intermediate biosynthesis; chorismate biosynthesis; chorismate from D-erythrose 4-phosphate and phosphoenolpyruvate: step 6/7. Its function is as follows. Catalyzes the transfer of the enolpyruvyl moiety of phosphoenolpyruvate (PEP) to the 5-hydroxyl of shikimate-3-phosphate (S3P) to produce enolpyruvyl shikimate-3-phosphate and inorganic phosphate. The polypeptide is 3-phosphoshikimate 1-carboxyvinyltransferase (Proteus mirabilis (strain HI4320)).